Consider the following 224-residue polypeptide: MAQDIKPTRKNLMEIEDRIDLSERGHDTLEQKRDGLIMEFMDILDQSQDVRSGLEGDYETAQQKINMARAMEGDVAVSGAAAALEEYPEITVESMNIMGVVVPQIESTKVKKSFDKRGYGILGTSARIDEAADAYEELLESIVLAAEVETAMKKMLTEIETTKRRVNALEFKLLPELHEGKEYIDQKLEEKEREEMFRMKKVKDKKEAQEEAADEAAAAESTGA.

Over residues 200–209 (KKVKDKKEAQ) the composition is skewed to basic and acidic residues. A disordered region spans residues 200-224 (KKVKDKKEAQEEAADEAAAAESTGA). Residues 215–224 (EAAAAESTGA) are compositionally biased toward low complexity.

Belongs to the V-ATPase D subunit family. As to quaternary structure, has multiple subunits with at least A(3), B(3), C, D, E, F, H, I and proteolipid K(x).

The protein localises to the cell membrane. Functionally, component of the A-type ATP synthase that produces ATP from ADP in the presence of a proton gradient across the membrane. This is A-type ATP synthase subunit D from Halobacterium salinarum (strain ATCC 29341 / DSM 671 / R1).